Reading from the N-terminus, the 211-residue chain is Urease accessory protein UreG (211 aa).

Residue 11–18 (GPVGAGKT) participates in GTP binding.

The protein belongs to the SIMIBI class G3E GTPase family. UreG subfamily. Homodimer. UreD, UreF and UreG form a complex that acts as a GTP-hydrolysis-dependent molecular chaperone, activating the urease apoprotein by helping to assemble the nickel containing metallocenter of UreC. The UreE protein probably delivers the nickel.

It is found in the cytoplasm. Facilitates the functional incorporation of the urease nickel metallocenter. This process requires GTP hydrolysis, probably effectuated by UreG. The chain is Urease accessory protein UreG from Actinobacillus pleuropneumoniae serotype 7 (strain AP76).